The primary structure comprises 140 residues: MRHGFRGRRFNRTVEHRKAMFANMSAALIKHEQIITTLPKAKDLRPVVEKLITLGKRGDLHARRQAIAQIRDEAMVKKLFEVLGPRYQTRPGGYCRIMKAGFRYGDNAPMAVIEFVDRDVNARGQDSGPTQAAASQTEAA.

The protein belongs to the bacterial ribosomal protein bL17 family. In terms of assembly, part of the 50S ribosomal subunit. Contacts protein L32.

The protein is Large ribosomal subunit protein bL17 of Methylobacterium nodulans (strain LMG 21967 / CNCM I-2342 / ORS 2060).